A 1321-amino-acid polypeptide reads, in one-letter code: Bile salt export pump (1321 aa).

Residues 1-62 (MSDSVILRSV…FSSWTDIWLM (62 aa)) are Cytoplasmic-facing. The region spanning 62–385 (MCMGSLCACI…ASPCLEAFAA (324 aa)) is the ABC transmembrane type-1 1 domain. The helical transmembrane segment at 63–83 (CMGSLCACIHGIAQPGVLLIF) threads the bilayer. At 84 to 147 (GTMTDVFIDY…MIRFAGYYAG (64 aa)) the chain is on the extracellular side. N-linked (GlcNAc...) asparagine glycans are attached at residues N109, N116, N122, and N125. A helical transmembrane segment spans residues 148–168 (IGIAVLTTGYIQICFWGIAAA). Topologically, residues 169–215 (HQIQKMRKSYFRKIMRMGIGWVDCNSVGKLNTPFSVDFNKINDSSAD) are cytoplasmic. Residues 216 to 236 (QLAIFIQGMTSPIFGFLVGFS) form a helical membrane-spanning segment. Topologically, residues 237-240 (QWWK) are extracellular. The helical transmembrane segment at 241 to 261 (LTLVIISVSPLIGLGAAIIGL) threads the bilayer. Over 262–319 (SVSKFTDYELKAYAKAGSVADEVISSMRTVAAFGGEKKEVERYEKNLVFAQRWGIRKG) the chain is Cytoplasmic. A helical transmembrane segment spans residues 320 to 340 (IVMGFFTGYMWCLIFFCYALA). Over 341 to 353 (FWYGSKLVLEEGE) the chain is Extracellular. Residues 354-374 (YSPGALVQIFLSVIIGALNLG) traverse the membrane as a helical segment. At 375–755 (NASPCLEAFA…KLNAPEWPYM (381 aa)) the chain is on the cytoplasmic side. The 237-residue stretch at 420–656 (IEFHNVTFHY…KGVYFALVTL (237 aa)) folds into the ABC transporter 1 domain. 455–462 (GPSGAGKS) is a binding site for ATP. A Phosphothreonine modification is found at T586. S587 carries the phosphoserine modification. The tract at residues 651-672 (FALVTLQSQRNQGDQEENEKDA) is interaction with HAX1. A disordered region spans residues 659 to 735 (QRNQGDQEEN…KDKDLPAQED (77 aa)). Residues 664 to 677 (DQEENEKDATEDDI) show a composition bias toward acidic residues. Residues S690, S701, and S704 each carry the phosphoserine modification. Residues 714-731 (VEDHKSTHEEDRKDKDLP) are compositionally biased toward basic and acidic residues. One can recognise an ABC transmembrane type-1 2 domain in the interval 755–1043 (MLLGSMGAAV…ASSYTPSYAK (289 aa)). A helical transmembrane segment spans residues 756–776 (LLGSMGAAVNGAVTPLYAFLF). Topologically, residues 777 to 794 (SQILGTFSLPDKEEQRSQ) are extracellular. A helical transmembrane segment spans residues 795 to 815 (INGICLLFVTLGCVSFFTQFL). The Cytoplasmic segment spans residues 816–869 (QGYTFAKSGELLTKRLRKFGFRAMLGQDIGWFDDLRNSPGALTTRLATDASQVQ). 2 helical membrane passes run 870-890 (GATGSQIGMMVNSFTNVTVAM) and 891-911 (IIAFLFSWKLTLGIVCFFPFL). Over 912 to 979 (ALSGALQTKM…PYKMAIKKAN (68 aa)) the chain is Cytoplasmic. Residues 980–1000 (VYGLCFGFSQCITFIANSASY) traverse the membrane as a helical segment. Topologically, residues 1001–1011 (RYGGYLISNEG) are extracellular. A helical transmembrane segment spans residues 1012–1032 (LHFSYVFRVISAVVLSATALG). The Cytoplasmic portion of the chain corresponds to 1033–1321 (RASSYTPSYA…KLVTTGSPIS (289 aa)). In terms of domain architecture, ABC transporter 2 spans 1078–1316 (IDFVDCKFTY…KGAYYKLVTT (239 aa)). 1113-1120 (GSSGCGKS) is a binding site for ATP. S1214 and S1321 each carry phosphoserine.

It belongs to the ABC transporter superfamily. ABCB family. Multidrug resistance exporter (TC 3.A.1.201) subfamily. Interacts with HAX1. Interacts with the adapter protein complex 2 (AP-2) throught AP2A2 or AP2A1; this interaction regulates cell membrane expression of ABCB11 through its internalization in a clathrin-dependent manner and its subsequent degradation. Post-translationally, N-glycosylated. Ubiquitinated; short-chain ubiquitination regulates cell-Surface expression of ABCB11. In terms of tissue distribution, expressed predominantly, if not exclusively in the liver, where it was further localized to the canalicular microvilli and to subcanalicular vesicles of the hepatocytes by in situ.

The protein localises to the apical cell membrane. It localises to the recycling endosome membrane. The protein resides in the endosome. Its subcellular location is the cell membrane. It carries out the reaction cholate(in) + ATP + H2O = cholate(out) + ADP + phosphate + H(+). The enzyme catalyses taurocholate(in) + ATP + H2O = taurocholate(out) + ADP + phosphate + H(+). It catalyses the reaction glycocholate(in) + ATP + H2O = glycocholate(out) + ADP + phosphate + H(+). The catalysed reaction is glycochenodeoxycholate(in) + ATP + H2O = glycochenodeoxycholate(out) + ADP + phosphate + H(+). It carries out the reaction taurochenodeoxycholate(in) + ATP + H2O = taurochenodeoxycholate(out) + ADP + phosphate + H(+). The enzyme catalyses glycoursodeoxycholate(in) + ATP + H2O = glycoursodeoxycholate(out) + ADP + phosphate + H(+). It catalyses the reaction tauroursodeoxycholate(in) + ATP + H2O = tauroursodeoxycholate(out) + ADP + phosphate + H(+). The catalysed reaction is taurodeoxycholate(in) + ATP + H2O = taurodeoxycholate(out) + ADP + phosphate + H(+). It carries out the reaction taurolithocholate 3-sulfate(in) + ATP + H2O = taurolithocholate 3-sulfate(out) + ADP + phosphate + H(+). The enzyme catalyses pravastatin(in) + ATP + H2O = pravastatin(out) + ADP + phosphate + H(+). The uptake of taurocholate is inhibited by taurolithocholate sulfate with an IC(50) of 9 uM. Pravastatin competitively inhibits the transport of taurocholic acid. Cyclosporin A, glibenclamide, rifampicin and troglitazonestrongly competitively inhibit the transport activity of taurocholate. The canalicular transport activity of taurocholate is strongly dependent on canalicular membrane cholesterol content. The uptake of taurocholate is increased by short- and medium-chain fatty acids. Cholesterol increases transport capacity of taurocholate without affecting the affinity for the substrate. Catalyzes the transport of the major hydrophobic bile salts, such as taurine and glycine-conjugated cholic acid across the canalicular membrane of hepatocytes in an ATP-dependent manner, therefore participates in hepatic bile acid homeostasis and consequently to lipid homeostasis through regulation of biliary lipid secretion in a bile salts dependent manner. Transports taurine-conjugated bile salts more rapidly than glycine-conjugated bile salts. Also transports non-bile acid compounds, such as pravastatin and fexofenadine in an ATP-dependent manner and may be involved in their biliary excretion. The polypeptide is Bile salt export pump (Oryctolagus cuniculus (Rabbit)).